Reading from the N-terminus, the 189-residue chain is MPKPTKGPRLGGSSSHQKALLANLATSLFEHGRIKTTEPKARALRPYAEKLITHAKKGALHNRREVLKKIRDKDVVHTLFAEIGPFFADREGGYTRIIKVEPRKGDNAPMAVIELVREKTVTSEADRARRVKASQAASQDAPSEPQAAEEPAAEEAVAATEAVAAPADAEATDAEAGSADADADEAPQN.

Positions 126 to 189 (DRARRVKASQ…DADADEAPQN (64 aa)) are disordered. Over residues 139–180 (QDAPSEPQAAEEPAAEEAVAATEAVAAPADAEATDAEAGSAD) the composition is skewed to low complexity.

The protein belongs to the bacterial ribosomal protein bL17 family. As to quaternary structure, part of the 50S ribosomal subunit. Contacts protein L32.

This is Large ribosomal subunit protein bL17 from Mycobacterium marinum (strain ATCC BAA-535 / M).